A 993-amino-acid chain; its full sequence is MVLRSRLPPWIMLCSVWLLRFAHTGEAQAAKEVILLDSKAQQTELEWISSPPNGWEEISGLDENYTPIRTYQVCQVMESNQNNWLRTNWIAKSNAQRIFVELKFTLRDCNSLPGVLGTCKETFNLYYYETDYDTGRNIRENQYVKIDTIAADESFTQGDLGERKMKLNTEVREIGPLSKKGFYLAFQDVGACIALVSVKVYYKKCWSIIENLAIFPDTVTGSEFSSLVEVRGTCVSSAEEEAENSPKMHCSAEGEWLVPIGKCICKAGYQQKGDTCEPCGRGFYKSSSQDLQCSRCPTHSFSDKEGSSRCDCEDSYYRAPSDPPYVACTRPPSAPQNLIFNINQTTVSLEWSPPADNGGRNDVTYRILCKRCSWEQGECVPCGSNIGYMPQQTGLVDNYVTVMDLLAHANYTFEVEAVNGVSDLSRSQRLFAAVSITTGQAAPSQVSGVMKERVLQRSVELSWQEPEHPNGVITEYEIKYYEKDQRERTYSTVKTKSTSASINNLKPGTVYVFQIRAFTAAGYGNYSPRLDVATLEEATATAVSSEQNPVIIIAVVAVAGTIILVFMVFGFIIGRRHCGYSKADQEGDEELYFHFKFPGTKTYIDPETYEDPNRAVHQFAKELDASCIKIERVIGAGEFGEVCSGRLKLPGKRDVAVAIKTLKVGYTEKQRRDFLCEASIMGQFDHPNVVHLEGVVTRGKPVMIVIEYMENGALDAFLRKHDGQFTVIQLVGMLRGIAAGMRYLADMGYVHRDLAARNILVNSNLVCKVSDFGLSRVIEDDPEAVYTTTGGKIPVRWTAPEAIQYRKFTSASDVWSYGIVMWEVMSYGERPYWDMSNQDVIKAIEEGYRLPAPMDCPAGLHQLMLDCWQKERGERPKFEQIVGILDKMIRNPNSLKTPLGTCSRPISPLLDQNTPDFTTFCSVGEWLQAIKMERYKDNFTAAGYNSLESVARMTIEDVMSLGITLVGHQKKIMSSIQTMRAQMLHLHGTGIQV.

The first 27 residues, 1-27 (MVLRSRLPPWIMLCSVWLLRFAHTGEA), serve as a signal peptide directing secretion. The Extracellular portion of the chain corresponds to 28 to 550 (QAAKEVILLD…TAVSSEQNPV (523 aa)). The Eph LBD domain maps to 32-210 (EVILLDSKAQ…YYKKCWSIIE (179 aa)). 2 Fibronectin type-III domains span residues 331 to 441 (PPSA…TGQA) and 442 to 537 (APSQ…TLEE). 2 N-linked (GlcNAc...) asparagine glycosylation sites follow: asparagine 343 and asparagine 410. The helical transmembrane segment at 551 to 571 (IIIAVVAVAGTIILVFMVFGF) threads the bilayer. Residues 572–993 (IIGRRHCGYS…LHLHGTGIQV (422 aa)) are Cytoplasmic-facing. 2 positions are modified to phosphotyrosine; by autocatalysis: tyrosine 603 and tyrosine 609. The Protein kinase domain maps to 628-889 (IKIERVIGAG…QIVGILDKMI (262 aa)). ATP is bound by residues 634–642 (IGAGEFGEV) and lysine 660. Residue aspartate 753 is the Proton acceptor of the active site. 2 positions are modified to phosphotyrosine; by autocatalysis: tyrosine 786 and tyrosine 935. In terms of domain architecture, SAM spans 918 to 982 (TTFCSVGEWL…MSSIQTMRAQ (65 aa)). A PDZ-binding motif is present at residues 991–993 (IQV).

Belongs to the protein kinase superfamily. Tyr protein kinase family. Ephrin receptor subfamily. Heterotetramer upon binding of the ligand. The heterotetramer is composed of an ephrin dimer and a receptor dimer. Oligomerization is probably required to induce biological responses. In terms of processing, phosphorylated.

The protein resides in the cell membrane. It carries out the reaction L-tyrosyl-[protein] + ATP = O-phospho-L-tyrosyl-[protein] + ADP + H(+). In terms of biological role, receptor tyrosine kinase which binds promiscuously GPI-anchored ephrin-A family ligands residing on adjacent cells, leading to contact-dependent bidirectional signaling into neighboring cells. The signaling pathway downstream of the receptor is referred to as forward signaling while the signaling pathway downstream of the ephrin ligand is referred to as reverse signaling. Among GPI-anchored ephrin-A ligands, EFNA5 is a cognate/functional ligand for EPHA7 and their interaction regulates brain development modulating cell-cell adhesion and repulsion. Has a repellent activity on axons and is for instance involved in the guidance of corticothalamic axons and in the proper topographic mapping of retinal axons to the colliculus. May also regulate brain development through a caspase(CASP3)-dependent proapoptotic activity. Forward signaling may result in activation of components of the ERK signaling pathway including MAP2K1, MAP2K2, MAPK1 and MAPK3 which are phosphorylated upon activation of EPHA7. The protein is Ephrin type-A receptor 7 (EPHA7) of Gallus gallus (Chicken).